Reading from the N-terminus, the 258-residue chain is Pimeloyl-[acyl-carrier protein] methyl ester esterase (258 aa).

In terms of domain architecture, AB hydrolase-1 spans 16-244; that stretch reads LVLVHGWGMN…QSSHAPFMTE (229 aa). Substrate-binding positions include Trp-22, 82–83, and 146–150; these read SL and FMALQ. The Nucleophile role is filled by Ser-82. Residues Asp-210 and His-238 contribute to the active site. Substrate is bound at residue His-238.

It belongs to the AB hydrolase superfamily. Carboxylesterase BioH family. Monomer.

Its subcellular location is the cytoplasm. The catalysed reaction is 6-carboxyhexanoyl-[ACP] methyl ester + H2O = 6-carboxyhexanoyl-[ACP] + methanol + H(+). It functions in the pathway cofactor biosynthesis; biotin biosynthesis. In terms of biological role, the physiological role of BioH is to remove the methyl group introduced by BioC when the pimeloyl moiety is complete. It allows to synthesize pimeloyl-ACP via the fatty acid synthetic pathway through the hydrolysis of the ester bonds of pimeloyl-ACP esters. The polypeptide is Pimeloyl-[acyl-carrier protein] methyl ester esterase (Vibrio atlanticus (strain LGP32) (Vibrio splendidus (strain Mel32))).